A 279-amino-acid chain; its full sequence is NH(3)-dependent NAD(+) synthetase (279 aa).

46–53 (GISGGQDS) is a binding site for ATP. Asp-52 contacts Mg(2+). Residue Arg-145 participates in deamido-NAD(+) binding. Thr-165 is an ATP binding site. Glu-170 is a binding site for Mg(2+). Deamido-NAD(+)-binding residues include Lys-178 and Asp-185. ATP-binding residues include Lys-194 and Thr-216. 265 to 266 (HK) is a binding site for deamido-NAD(+).

The protein belongs to the NAD synthetase family. In terms of assembly, homodimer.

The enzyme catalyses deamido-NAD(+) + NH4(+) + ATP = AMP + diphosphate + NAD(+) + H(+). Its pathway is cofactor biosynthesis; NAD(+) biosynthesis; NAD(+) from deamido-NAD(+) (ammonia route): step 1/1. Functionally, catalyzes the ATP-dependent amidation of deamido-NAD to form NAD. Uses ammonia as a nitrogen source. This Rhodococcus jostii (strain RHA1) protein is NH(3)-dependent NAD(+) synthetase.